Consider the following 957-residue polypeptide: Glycine dehydrogenase (decarboxylating) (957 aa).

At Lys-708 the chain carries N6-(pyridoxal phosphate)lysine.

It belongs to the GcvP family. The glycine cleavage system is composed of four proteins: P, T, L and H. Pyridoxal 5'-phosphate is required as a cofactor.

It catalyses the reaction N(6)-[(R)-lipoyl]-L-lysyl-[glycine-cleavage complex H protein] + glycine + H(+) = N(6)-[(R)-S(8)-aminomethyldihydrolipoyl]-L-lysyl-[glycine-cleavage complex H protein] + CO2. In terms of biological role, the glycine cleavage system catalyzes the degradation of glycine. The P protein binds the alpha-amino group of glycine through its pyridoxal phosphate cofactor; CO(2) is released and the remaining methylamine moiety is then transferred to the lipoamide cofactor of the H protein. The sequence is that of Glycine dehydrogenase (decarboxylating) from Salmonella paratyphi B (strain ATCC BAA-1250 / SPB7).